Here is a 244-residue protein sequence, read N- to C-terminus: Probable 2-phosphosulfolactate phosphatase (244 aa).

This sequence belongs to the ComB family. It depends on Mg(2+) as a cofactor.

The catalysed reaction is (2R)-O-phospho-3-sulfolactate + H2O = (2R)-3-sulfolactate + phosphate. In Thermosynechococcus vestitus (strain NIES-2133 / IAM M-273 / BP-1), this protein is Probable 2-phosphosulfolactate phosphatase.